Here is a 194-residue protein sequence, read N- to C-terminus: Auxin-induced protein 22A (194 aa).

The EAR-like (transcriptional repression) signature appears at Leu13–Leu17. Residues Glu40–Lys62 form a disordered region. The region spanning Lys85–Asp173 is the PB1 domain.

It belongs to the Aux/IAA family. As to quaternary structure, homodimers and heterodimers.

It localises to the nucleus. Its function is as follows. Aux/IAA proteins are short-lived transcriptional factors that function as repressors of early auxin response genes at low auxin concentrations. Repression is thought to result from the interaction with auxin response factors (ARFs), proteins that bind to the auxin-responsive promoter element (AuxRE). Formation of heterodimers with ARF proteins may alter their ability to modulate early auxin response genes expression. This chain is Auxin-induced protein 22A (AUX22A), found in Vigna radiata var. radiata (Mung bean).